The following is a 547-amino-acid chain: KsdD-like steroid dehydrogenase MSMEG_5835 (547 aa).

5-36 (DVIVVGAGLAGLVAACELVERGHSVIIVDQEN) provides a ligand contact to FAD.

It belongs to the FAD-dependent oxidoreductase 2 family. Requires FAD as cofactor.

It participates in lipid metabolism; steroid biosynthesis. Functionally, able to catalyze the elimination of the C-1 and C-2 hydrogen atoms of the A-ring from the polycyclic ring structure of 3-ketosteroids, but the ketosteroid dehydrogenase activity is low compared to KsdD in the cholesterol degradation process. The low activity could be due to different substrate specificity. This chain is KsdD-like steroid dehydrogenase MSMEG_5835, found in Mycolicibacterium smegmatis (strain ATCC 700084 / mc(2)155) (Mycobacterium smegmatis).